We begin with the raw amino-acid sequence, 332 residues long: Probable sugar phosphate/phosphate translocator At1g53660 (332 aa).

10 helical membrane passes run 19–39 (ASIL…KWVL), 46–66 (FPYP…LCFL), 82–102 (LEIY…TLWL), 120–140 (AIMP…IMSC), 143–163 (LLIM…ELNI), 165–185 (WVGV…LILM), 199–219 (LSLM…PWIF), 233–253 (LVLS…FLVI), 259–281 (LTIR…LLFA), and 285–304 (LTII…ATYN). Over residues 312 to 322 (ESITLVSQSPK) the composition is skewed to polar residues. Residues 312-332 (ESITLVSQSPKNSDKKPDGPL) are disordered. A compositionally biased stretch (basic and acidic residues) spans 323 to 332 (NSDKKPDGPL).

This sequence belongs to the TPT transporter family. TPT (TC 2.A.7.9) subfamily.

It localises to the membrane. This is Probable sugar phosphate/phosphate translocator At1g53660 from Arabidopsis thaliana (Mouse-ear cress).